Reading from the N-terminus, the 172-residue chain is MKLLAGSFAALFLSLSAQAADCTFTQLEIVPQFGSPNMFGGEDEHVRVMFSNEDPNDDNPDAFPEPPVYLADRDSGNDCRIEDGGIWSRGGVFLSQDGRRVLMHEFSGSSAELVSYDSATCKVVHREDISGQRWAVDKDGLRLGQKCSGESVDSCAKIVKRSLAPFCQTAKK.

The signal sequence occupies residues 1-19; that stretch reads MKLLAGSFAALFLSLSAQA. 3 cysteine pairs are disulfide-bonded: cysteine 22–cysteine 167, cysteine 79–cysteine 121, and cysteine 147–cysteine 155.

In terms of assembly, forms a heterotetramer with Tse1 consisting of two Tse1 dimers and two Tsi1 dimers. Formation of the complex inactivates Tse1 enzymatic activity.

Functionally, immunity protein that plays a role in preventing early activation of toxin Tse1. Binds to a large surface of Tse1 and thereby occludes the active site to specifically inhibits enzyme activity by forming a hydrogen bond with the catalytic diad. This is Immune protein Tsi1 from Pseudomonas aeruginosa (strain ATCC 15692 / DSM 22644 / CIP 104116 / JCM 14847 / LMG 12228 / 1C / PRS 101 / PAO1).